The primary structure comprises 341 residues: L-threonine 3-dehydrogenase (341 aa).

Cysteine 38 is a binding site for Zn(2+). Catalysis depends on charge relay system residues threonine 40 and histidine 43. Residues histidine 63, glutamate 64, cysteine 93, cysteine 96, cysteine 99, and cysteine 107 each contribute to the Zn(2+) site. NAD(+) contacts are provided by residues isoleucine 175, aspartate 195, arginine 200, 262–264 (LGI), and 286–287 (IY).

Belongs to the zinc-containing alcohol dehydrogenase family. In terms of assembly, homotetramer. It depends on Zn(2+) as a cofactor.

The protein localises to the cytoplasm. The catalysed reaction is L-threonine + NAD(+) = (2S)-2-amino-3-oxobutanoate + NADH + H(+). It functions in the pathway amino-acid degradation; L-threonine degradation via oxydo-reductase pathway; glycine from L-threonine: step 1/2. Functionally, catalyzes the NAD(+)-dependent oxidation of L-threonine to 2-amino-3-ketobutyrate. The polypeptide is L-threonine 3-dehydrogenase (Shewanella sp. (strain ANA-3)).